The chain runs to 506 residues: 7,8-dihydro-6-hydroxymethylpterin dimethyltransferase (506 aa).

[4Fe-4S] cluster-binding residues include Cys73, Cys77, Cys80, Cys98, Cys102, and Cys105. Positions 82–300 constitute a Radical SAM core domain; that stretch reads NHKSTTILAN…FIKLVEEQTD (219 aa).

It belongs to the radical SAM superfamily. [4Fe-4S] cluster serves as cofactor. S-adenosyl-L-methionine is required as a cofactor.

Its pathway is cofactor biosynthesis; 5,6,7,8-tetrahydromethanopterin biosynthesis. In terms of biological role, is responsible for the addition of methyl groups at C-7 and C-9 of the pterin ring during methanopterin (MPT) biosynthesis. Catalyzes methylation of 7,8-dihydro-6-hydroxymethylpterin, likely using methylenetetrahydromethanopterin as a methyl group donor, via a radical-based mechanism. In Methanocaldococcus jannaschii (strain ATCC 43067 / DSM 2661 / JAL-1 / JCM 10045 / NBRC 100440) (Methanococcus jannaschii), this protein is 7,8-dihydro-6-hydroxymethylpterin dimethyltransferase.